Reading from the N-terminus, the 208-residue chain is Large ribosomal subunit protein bL25 (208 aa).

Residues 186–201 (PAGEKSAAAEEGAAAA) show a composition bias toward low complexity. Residues 186–208 (PAGEKSAAAEEGAAAAGEDKPAA) form a disordered region.

This sequence belongs to the bacterial ribosomal protein bL25 family. CTC subfamily. Part of the 50S ribosomal subunit; part of the 5S rRNA/L5/L18/L25 subcomplex. Contacts the 5S rRNA. Binds to the 5S rRNA independently of L5 and L18.

In terms of biological role, this is one of the proteins that binds to the 5S RNA in the ribosome where it forms part of the central protuberance. This chain is Large ribosomal subunit protein bL25, found in Ralstonia pickettii (strain 12J).